The sequence spans 363 residues: 3-dehydroquinate synthase (363 aa).

NAD(+) is bound by residues 134-135 (TT), K147, and K156. Residues E189, H254, and H271 each coordinate Zn(2+).

This sequence belongs to the sugar phosphate cyclases superfamily. Dehydroquinate synthase family. Co(2+) is required as a cofactor. It depends on Zn(2+) as a cofactor. NAD(+) serves as cofactor.

It is found in the cytoplasm. It catalyses the reaction 7-phospho-2-dehydro-3-deoxy-D-arabino-heptonate = 3-dehydroquinate + phosphate. It functions in the pathway metabolic intermediate biosynthesis; chorismate biosynthesis; chorismate from D-erythrose 4-phosphate and phosphoenolpyruvate: step 2/7. Catalyzes the conversion of 3-deoxy-D-arabino-heptulosonate 7-phosphate (DAHP) to dehydroquinate (DHQ). The sequence is that of 3-dehydroquinate synthase from Prochlorococcus marinus (strain MIT 9215).